A 270-amino-acid chain; its full sequence is Putative pyruvate, phosphate dikinase regulatory protein 2 (270 aa).

Residue 151–158 coordinates ADP; that stretch reads GVSRTSKT.

Belongs to the pyruvate, phosphate/water dikinase regulatory protein family. PDRP subfamily.

The catalysed reaction is N(tele)-phospho-L-histidyl/L-threonyl-[pyruvate, phosphate dikinase] + ADP = N(tele)-phospho-L-histidyl/O-phospho-L-threonyl-[pyruvate, phosphate dikinase] + AMP + H(+). It catalyses the reaction N(tele)-phospho-L-histidyl/O-phospho-L-threonyl-[pyruvate, phosphate dikinase] + phosphate + H(+) = N(tele)-phospho-L-histidyl/L-threonyl-[pyruvate, phosphate dikinase] + diphosphate. Bifunctional serine/threonine kinase and phosphorylase involved in the regulation of the pyruvate, phosphate dikinase (PPDK) by catalyzing its phosphorylation/dephosphorylation. The chain is Putative pyruvate, phosphate dikinase regulatory protein 2 from Listeria monocytogenes serotype 4b (strain F2365).